Consider the following 176-residue polypeptide: Ribosome maturation factor RimM (176 aa).

Positions 93–166 (EGEYYHADLI…RVVIEMPGEI (74 aa)) constitute a PRC barrel domain.

Belongs to the RimM family. Binds ribosomal protein uS19.

The protein resides in the cytoplasm. In terms of biological role, an accessory protein needed during the final step in the assembly of 30S ribosomal subunit, possibly for assembly of the head region. Essential for efficient processing of 16S rRNA. May be needed both before and after RbfA during the maturation of 16S rRNA. It has affinity for free ribosomal 30S subunits but not for 70S ribosomes. This is Ribosome maturation factor RimM from Rhodopseudomonas palustris (strain BisA53).